A 431-amino-acid chain; its full sequence is Adenylosuccinate synthetase (431 aa).

GTP-binding positions include 13-19 (GDEGKGK) and 41-43 (GHT). Aspartate 14 serves as the catalytic Proton acceptor. Residues aspartate 14 and glycine 41 each coordinate Mg(2+). IMP is bound by residues 14–17 (DEGK), 39–42 (NAGH), threonine 130, arginine 144, glutamine 225, threonine 240, and arginine 304. Residue histidine 42 is the Proton donor of the active site. Residue 300-306 (ATTHRPR) coordinates substrate. GTP-binding positions include arginine 306, 332–334 (KLD), and 414–416 (STG).

This sequence belongs to the adenylosuccinate synthetase family. As to quaternary structure, homodimer. Mg(2+) is required as a cofactor.

The protein localises to the cytoplasm. The catalysed reaction is IMP + L-aspartate + GTP = N(6)-(1,2-dicarboxyethyl)-AMP + GDP + phosphate + 2 H(+). The protein operates within purine metabolism; AMP biosynthesis via de novo pathway; AMP from IMP: step 1/2. Functionally, plays an important role in the de novo pathway of purine nucleotide biosynthesis. Catalyzes the first committed step in the biosynthesis of AMP from IMP. In Nitrosococcus oceani (strain ATCC 19707 / BCRC 17464 / JCM 30415 / NCIMB 11848 / C-107), this protein is Adenylosuccinate synthetase.